The primary structure comprises 299 residues: tRNA dimethylallyltransferase 2 (299 aa).

9-16 (GPTGVGKT) is an ATP binding site. Substrate is bound at residue 11–16 (TGVGKT). The segment at 34–37 (DSRQ) is interaction with substrate tRNA.

The protein belongs to the IPP transferase family. As to quaternary structure, monomer. Mg(2+) serves as cofactor.

The enzyme catalyses adenosine(37) in tRNA + dimethylallyl diphosphate = N(6)-dimethylallyladenosine(37) in tRNA + diphosphate. Its function is as follows. Catalyzes the transfer of a dimethylallyl group onto the adenine at position 37 in tRNAs that read codons beginning with uridine, leading to the formation of N6-(dimethylallyl)adenosine (i(6)A). This chain is tRNA dimethylallyltransferase 2, found in Parabacteroides distasonis (strain ATCC 8503 / DSM 20701 / CIP 104284 / JCM 5825 / NCTC 11152).